Here is a 306-residue protein sequence, read N- to C-terminus: Ornithine carbamoyltransferase (306 aa).

Carbamoyl phosphate contacts are provided by residues 46-49 (STRT), Q73, R97, and 124-127 (HPTQ). L-ornithine is bound by residues N156, D220, and 224–225 (SM). Carbamoyl phosphate contacts are provided by residues 260–261 (CL) and R288.

This sequence belongs to the aspartate/ornithine carbamoyltransferase superfamily. OTCase family.

It is found in the cytoplasm. It catalyses the reaction carbamoyl phosphate + L-ornithine = L-citrulline + phosphate + H(+). The protein operates within amino-acid biosynthesis; L-arginine biosynthesis; L-arginine from L-ornithine and carbamoyl phosphate: step 1/3. Reversibly catalyzes the transfer of the carbamoyl group from carbamoyl phosphate (CP) to the N(epsilon) atom of ornithine (ORN) to produce L-citrulline. This is Ornithine carbamoyltransferase from Campylobacter jejuni (strain RM1221).